A 99-amino-acid chain; its full sequence is Class II hydrophobin 1 (99 aa).

Positions methionine 1 to threonine 26 are cleaved as a signal peptide. Disulfide bonds link cysteine 31-cysteine 80, cysteine 41-cysteine 71, cysteine 42-cysteine 54, and cysteine 81-cysteine 92.

The protein belongs to the cerato-ulmin hydrophobin family. Homotetramer. Further self-assembles to form highly ordered films at water-air interfaces through intermolecular interactions.

The protein localises to the secreted. It localises to the cell wall. In terms of biological role, aerial growth, conidiation, and dispersal of filamentous fungi in the environment rely upon a capability of their secreting small amphipathic proteins called hydrophobins (HPBs) with low sequence identity. Class I can self-assemble into an outermost layer of rodlet bundles on aerial cell surfaces, conferring cellular hydrophobicity that supports fungal growth, development and dispersal; whereas Class II form highly ordered films at water-air interfaces through intermolecular interactions but contribute nothing to the rodlet structure. HFB1 is a class II hydrophobin that shows antifungal activity against pathogenic and opportunistic fungi such as Cryptococcus neoformans, Nakaseomyces glabrataa, or Candida tropicalis. This is Class II hydrophobin 1 from Sodiomyces alkalinus (strain CBS 110278 / VKM F-3762 / F11) (Alkaliphilic filamentous fungus).